The chain runs to 60 residues: Sperm protamine P1 (60 aa).

Residues 1–60 (MARYRHSRSRSRSRYRRRRRRRSRYRSRRRRXRRRRRSRRGRRRRGYSRRRYSRRRRRRY) form a disordered region.

Belongs to the protamine P1 family. In terms of tissue distribution, testis.

The protein resides in the nucleus. It localises to the chromosome. Protamines substitute for histones in the chromatin of sperm during the haploid phase of spermatogenesis. They compact sperm DNA into a highly condensed, stable and inactive complex. This Petrogale concinna (Nabarlek) protein is Sperm protamine P1 (PRM1).